The following is a 417-amino-acid chain: Serine hydroxymethyltransferase (417 aa).

(6S)-5,6,7,8-tetrahydrofolate is bound by residues Leu122 and 126 to 128 (GHL). Residue Lys230 is modified to N6-(pyridoxal phosphate)lysine. 355–357 (SPF) lines the (6S)-5,6,7,8-tetrahydrofolate pocket.

This sequence belongs to the SHMT family. In terms of assembly, homodimer. Pyridoxal 5'-phosphate serves as cofactor.

It localises to the cytoplasm. The enzyme catalyses (6R)-5,10-methylene-5,6,7,8-tetrahydrofolate + glycine + H2O = (6S)-5,6,7,8-tetrahydrofolate + L-serine. The protein operates within one-carbon metabolism; tetrahydrofolate interconversion. It functions in the pathway amino-acid biosynthesis; glycine biosynthesis; glycine from L-serine: step 1/1. Its function is as follows. Catalyzes the reversible interconversion of serine and glycine with tetrahydrofolate (THF) serving as the one-carbon carrier. This reaction serves as the major source of one-carbon groups required for the biosynthesis of purines, thymidylate, methionine, and other important biomolecules. Also exhibits THF-independent aldolase activity toward beta-hydroxyamino acids, producing glycine and aldehydes, via a retro-aldol mechanism. In Francisella tularensis subsp. tularensis (strain FSC 198), this protein is Serine hydroxymethyltransferase.